The following is a 568-amino-acid chain: Hexose transporter 1 (568 aa).

Topologically, residues 1 to 32 (MATEEMREKSLKREAESLWDIPPESYASKACS) are cytoplasmic. A helical transmembrane segment spans residues 33 to 53 (CMGTAAQLVMVAVLGSFQFGF). Residues 54-86 (NLSALNTSKAFIILDFGWCKDENGGHYSDCDTG) lie on the Extracellular side of the membrane. Cys-72 and Cys-83 are disulfide-bonded. Residues 87–107 (LVYGSLINTAVFLGACVGCLL) form a helical membrane-spanning segment. Over 108–119 (GGRLTDFGRRAS) the chain is Cytoplasmic. A helical transmembrane segment spans residues 120–140 (LIFTHCVCTLGCILSAAAEGF). The Extracellular portion of the chain corresponds to 141–142 (PT). The chain crosses the membrane as a helical span at residues 143-163 (LLIARLVVGVAVGMFTVCVPM). The Cytoplasmic portion of the chain corresponds to 164 to 182 (YLSEVTPDDRRGYFGTFHQ). Gln-182 is an alpha-D-glucose binding site. Position 182 (Gln-182) interacts with beta-D-glucose. A helical transmembrane segment spans residues 183–203 (LFITLGIFFGTLLGLAFGNAP). Topologically, residues 204 to 220 (AGDEVYEVSTFQQAWWR) are extracellular. The helical transmembrane segment at 221–241 (VMLGLPAVVSLLAIWLLWFVF) threads the bilayer. At 242 to 306 (PFETPQYMVE…KAIVHPTYRS (65 aa)) the chain is on the cytoplasmic side. A helical membrane pass occupies residues 307–327 (VILLACLLSIMQQFTGINVLV). Gln-318, Gln-319, and Asn-324 together coordinate alpha-D-glucose. Gln-318 is a binding site for beta-D-glucose. Beta-D-glucose is bound at residue Asn-324. Topologically, residues 328 to 345 (ANSNNLYSSLKLPQDAVT) are extracellular. The chain crosses the membrane as a helical span at residues 346 to 366 (GLTVGFTALNVFLTVITIPLV). Beta-D-glucose is bound at residue Asn-355. Residues 367-374 (DRLGRRTL) lie on the Cytoplasmic side of the membrane. The chain crosses the membrane as a helical span at residues 375 to 395 (LLFSEAVMFVAMGIAFVANLV). At 396-406 (DQSNTAVQWVT) the chain is on the extracellular side. Residues 407 to 427 (VACVYVFIVGFAVGYGPVLWI) form a helical membrane-spanning segment. Trp-426 is a binding site for alpha-D-glucose. Topologically, residues 428–443 (YIHEIFPPEIKQGAAS) are cytoplasmic. Residues 444 to 464 (LASALNWVATVAIVLPSDFLL) traverse the membrane as a helical segment. Residues 465-469 (KQGFS) lie on the Extracellular side of the membrane. Residues 470-490 (VFVGICTVALAIIFVVTFIFV) traverse the membrane as a helical segment. Residues 491–568 (KETKGLSIEE…DDLTKGTEVV (78 aa)) lie on the Cytoplasmic side of the membrane.

This sequence belongs to the major facilitator superfamily. Sugar transporter (TC 2.A.1.1) family. As to quaternary structure, homodimer.

It is found in the cell membrane. It catalyses the reaction D-glucose(out) = D-glucose(in). It carries out the reaction D-fructose(out) = D-fructose(in). The catalysed reaction is D-galactose(in) = D-galactose(out). The enzyme catalyses D-mannose(out) = D-mannose(in). It catalyses the reaction D-glucosamine(out) = D-glucosamine(in). It carries out the reaction D-xylose(out) = D-xylose(in). Inhibited by cytochalasin B. In terms of biological role, sodium-independent facilitative hexose transporter. Can transport D-glucose and D-mannose with high affinity, and D-fructose and D-galactose with low affinity. Can transport D-xylose and D-glucosamine. The sequence is that of Hexose transporter 1 from Toxoplasma gondii.